An 801-amino-acid polypeptide reads, in one-letter code: Transducin beta-like protein 3 (801 aa).

The residue at position 2 (Ala-2) is an N-acetylalanine. 13 WD repeats span residues 64–105 (EDQE…RLWK), 107–146 (IHTAPVASMAFDATSTLLATGGCDGAVRVWDIVQHYGTHH), 149–190 (GSPG…CLAV), 193–232 (AHYSAVTSLSFSEGGHTMLSSGRDKICIVWDLQSYQTTRT), 245–284 (LPEQPAPALGVKSSGLHFLTAGDQGILRVWEAASGQCVYT), 290–329 (GLRQELTHCTLARAADLLLTVTADHNLLLYEAHSLQLQKQ), 332–372 (GYSE…CQIL), 374–413 (GHTDIVLALDVFRKGWLFASCAKDQSIRIWKMNKAGQVAC), 419–459 (GHTH…LAKS), 477–516 (CHDKDINSLAVSPNDKLLATGSQDRTAKLWALPQCQLLGV), 519–560 (GHRR…KTFE), 562–602 (HDAS…RTLD), and 604–642 (HEDKVWGLHCSQLDDHAITGGSDSRIILWKDVTEAEQAE). Ser-257 bears the Phosphoserine mark. Residue Lys-407 forms a Glycyl lysine isopeptide (Lys-Gly) (interchain with G-Cter in SUMO2) linkage.

Part of the small subunit (SSU) processome, composed of more than 70 proteins and the RNA chaperone small nucleolar RNA (snoRNA) U3.

The protein localises to the nucleus. The protein resides in the nucleolus. Its function is as follows. Part of the small subunit (SSU) processome, first precursor of the small eukaryotic ribosomal subunit. During the assembly of the SSU processome in the nucleolus, many ribosome biogenesis factors, an RNA chaperone and ribosomal proteins associate with the nascent pre-rRNA and work in concert to generate RNA folding, modifications, rearrangements and cleavage as well as targeted degradation of pre-ribosomal RNA by the RNA exosome. The sequence is that of Transducin beta-like protein 3 (Tbl3) from Mus musculus (Mouse).